Reading from the N-terminus, the 223-residue chain is Small ribosomal subunit protein uS3 (223 aa).

The region spanning 39 to 108 is the KH type-2 domain; that stretch reads IRKFVKKKGA…VILINIVEVK (70 aa).

The protein belongs to the universal ribosomal protein uS3 family. Part of the 30S ribosomal subunit. Forms a tight complex with proteins S10 and S14.

In terms of biological role, binds the lower part of the 30S subunit head. Binds mRNA in the 70S ribosome, positioning it for translation. In Clostridium kluyveri (strain NBRC 12016), this protein is Small ribosomal subunit protein uS3.